The sequence spans 88 residues: HssA/B-like protein 17 (88 aa).

This sequence belongs to the hssA/B family.

The protein is HssA/B-like protein 17 (hssl17) of Dictyostelium discoideum (Social amoeba).